We begin with the raw amino-acid sequence, 387 residues long: ATP phosphoribosyltransferase regulatory subunit (387 aa).

It belongs to the class-II aminoacyl-tRNA synthetase family. HisZ subfamily. As to quaternary structure, heteromultimer composed of HisG and HisZ subunits.

It localises to the cytoplasm. Its pathway is amino-acid biosynthesis; L-histidine biosynthesis; L-histidine from 5-phospho-alpha-D-ribose 1-diphosphate: step 1/9. Its function is as follows. Required for the first step of histidine biosynthesis. May allow the feedback regulation of ATP phosphoribosyltransferase activity by histidine. The sequence is that of ATP phosphoribosyltransferase regulatory subunit from Psychrobacter cryohalolentis (strain ATCC BAA-1226 / DSM 17306 / VKM B-2378 / K5).